We begin with the raw amino-acid sequence, 222 residues long: 25 kDa elongation factor 1-beta (222 aa).

Over residues 75-94 (TSASAPAKQAPKKAASAPAK) the composition is skewed to low complexity. A disordered region spans residues 75–98 (TSASAPAKQAPKKAASAPAKQADE).

It belongs to the EF-1-beta/EF-1-delta family. In terms of assembly, EF-1 is composed of 4 subunits: alpha, beta, delta, and gamma.

Its function is as follows. EF-1-beta and EF-1-delta stimulate the exchange of GDP bound to EF-1-alpha to GTP. The protein is 25 kDa elongation factor 1-beta of Trypanosoma cruzi.